Here is a 371-residue protein sequence, read N- to C-terminus: MGRVISSWRVLAVVAALMAMAAVELCAAIPFDERDLESDEALWDLYERWQEHHHVPRHHGEKHRRFGAFKDNVRYIHEHNKRGGRGYRLRLNRFGDMGREEFRATFAGSHANDLRRDGLAAPPLPGFMYEGVRDLPRAVDWRRKGAVTGVKDQGKCGSCWAFSTVVSVEGINAIRTGRLVSLSEQELIDCDTADNSGCQGGLMENAFEYIKHSGGITTESAYPYRAANGTCDAVRARRAPLVVIDGHQNVPANSEAALAKAVANQPVSVAIDAGDQSFQFYSDGVFAGDCGTDLDHGVAVVGYGETNDGTEYWIVKNSWGTAWGEGGYIRMQRDSGYDGGLCGIAMEASYPVKFSPNRVTPRRALGAKETQ.

Positions 1–28 (MGRVISSWRVLAVVAALMAMAAVELCAA) are cleaved as a signal peptide. Residues 29 to 133 (IPFDERDLES…LPGFMYEGVR (105 aa)) constitute a propeptide, activation peptide. 3 disulfide bridges follow: Cys156-Cys198, Cys190-Cys231, and Cys290-Cys342. The active site involves Cys159. N-linked (GlcNAc...) asparagine glycosylation occurs at Asn228. Residues His296 and Asn317 contribute to the active site.

This sequence belongs to the peptidase C1 family. As to expression, expressed in germinating seeds.

Its subcellular location is the protein storage vacuole. Its function is as follows. Cysteine endopeptidase that digests in vitro both the acidic and basic subunits of glutelin, the major seed storage protein of rice. Acts as a negative regulator of cell death. This Oryza sativa subsp. japonica (Rice) protein is Cysteine endopeptidase Rep1.